Here is a 361-residue protein sequence, read N- to C-terminus: Cytochrome c peroxidase, mitochondrial (361 aa).

A mitochondrion-targeting transit peptide spans 1–67; sequence MTTAVRLLPS…NWGKAAALAS (67 aa). Catalysis depends on H119, which acts as the Proton acceptor. Y220 carries the post-translational modification Phosphotyrosine. H242 is a heme b binding site. W258 serves as the catalytic Tryptophan radical intermediate.

It belongs to the peroxidase family. Cytochrome c peroxidase subfamily. As to quaternary structure, forms a one-to-one complex with cytochrome c. Requires heme b as cofactor. Post-translationally, CCP1 precursor is processed by the rhomboid protease PCP1, which cleaves the N-terminal hydrophobic transit peptide. The m-AAA protease (composed of YTA12/RCA1 and YTA10/AFG3) is required for CCP1 maturation: m-AAA protease promotes membrane dislocation of the CCP1 transmembrane segment within the transit peptide to ensure the correct positioning of CCP1 within the membrane bilayer, allowing intramembrane cleavage by PCP1.

The protein localises to the mitochondrion matrix. The protein resides in the mitochondrion intermembrane space. The catalysed reaction is 2 Fe(II)-[cytochrome c] + H2O2 + 2 H(+) = 2 Fe(III)-[cytochrome c] + 2 H2O. Its function is as follows. Destroys radicals which are normally produced within the cells and which are toxic to biological systems. The chain is Cytochrome c peroxidase, mitochondrial (CCP1) from Saccharomyces cerevisiae (strain ATCC 204508 / S288c) (Baker's yeast).